The sequence spans 329 residues: DNA-directed RNA polymerase subunit alpha (329 aa).

The interval 1 to 235 is alpha N-terminal domain (alpha-NTD); the sequence is MQGSVTEFLK…EQLDAFVDLR (235 aa). Positions 249–329 are alpha C-terminal domain (alpha-CTD); sequence FDPILLRPVD…NWPPASIAED (81 aa).

The protein belongs to the RNA polymerase alpha chain family. Homodimer. The RNAP catalytic core consists of 2 alpha, 1 beta, 1 beta' and 1 omega subunit. When a sigma factor is associated with the core the holoenzyme is formed, which can initiate transcription.

The catalysed reaction is RNA(n) + a ribonucleoside 5'-triphosphate = RNA(n+1) + diphosphate. Functionally, DNA-dependent RNA polymerase catalyzes the transcription of DNA into RNA using the four ribonucleoside triphosphates as substrates. The polypeptide is DNA-directed RNA polymerase subunit alpha (Actinobacillus pleuropneumoniae serotype 5b (strain L20)).